The following is a 706-amino-acid chain: Methionine--tRNA ligase (706 aa).

A 'HIGH' region motif is present at residues 13-23 (PYANGNFHIGH). Zn(2+) contacts are provided by Cys-144, Cys-147, Cys-157, and Cys-160. The 'KMSKS' region signature appears at 341–345 (KMSKS). ATP is bound at residue Lys-344. The 107-residue stretch at 600 to 706 (DFAKIDLRIA…PGATPGMRVR (107 aa)) folds into the tRNA-binding domain.

The protein belongs to the class-I aminoacyl-tRNA synthetase family. MetG type 1 subfamily. As to quaternary structure, homodimer. Requires Zn(2+) as cofactor.

Its subcellular location is the cytoplasm. The catalysed reaction is tRNA(Met) + L-methionine + ATP = L-methionyl-tRNA(Met) + AMP + diphosphate. In terms of biological role, is required not only for elongation of protein synthesis but also for the initiation of all mRNA translation through initiator tRNA(fMet) aminoacylation. The chain is Methionine--tRNA ligase from Paracidovorax citrulli (strain AAC00-1) (Acidovorax citrulli).